The primary structure comprises 204 residues: Cytochrome c biogenesis ATP-binding export protein CcmA (204 aa).

Residues 2 to 202 (LEIRNVTCIR…DSNELKKIRL (201 aa)) enclose the ABC transporter domain. Position 34–41 (34–41 (GQNGAGKT)) interacts with ATP.

The protein belongs to the ABC transporter superfamily. CcmA exporter (TC 3.A.1.107) family. The complex is composed of two ATP-binding proteins (CcmA) and two transmembrane proteins (CcmB).

It is found in the cell inner membrane. The catalysed reaction is heme b(in) + ATP + H2O = heme b(out) + ADP + phosphate + H(+). Part of the ABC transporter complex CcmAB involved in the biogenesis of c-type cytochromes; once thought to export heme, this seems not to be the case, but its exact role is uncertain. Responsible for energy coupling to the transport system. In Aliivibrio fischeri (strain ATCC 700601 / ES114) (Vibrio fischeri), this protein is Cytochrome c biogenesis ATP-binding export protein CcmA.